We begin with the raw amino-acid sequence, 341 residues long: Protein MENT (341 aa).

An N-terminal signal peptide occupies residues 1-23; the sequence is MVPAAGALLWVLLLNLGPRAAGA. Residues 115-196 are disordered; it reads AGKDSTSREL…SPSPTAMPSP (82 aa). Positions 127-155 are enriched in polar residues; it reads ATPNTAGSSSTRFIANSQEPEIRLTSSLP.

In terms of processing, phosphorylation sites are present in the extracellular medium. In terms of tissue distribution, plasma. Overexpressed in lymphomas.

The protein localises to the secreted. Functionally, involved in control of cellular proliferation. Onconcogenic modifier contributing to the tumor suppressor function of DNMT3B. This is Protein MENT (MENT) from Homo sapiens (Human).